Here is a 309-residue protein sequence, read N- to C-terminus: Homoserine kinase (309 aa).

91-101 (PIGSGLGSSAC) serves as a coordination point for ATP.

The protein belongs to the GHMP kinase family. Homoserine kinase subfamily.

The protein localises to the cytoplasm. The catalysed reaction is L-homoserine + ATP = O-phospho-L-homoserine + ADP + H(+). It functions in the pathway amino-acid biosynthesis; L-threonine biosynthesis; L-threonine from L-aspartate: step 4/5. In terms of biological role, catalyzes the ATP-dependent phosphorylation of L-homoserine to L-homoserine phosphate. This chain is Homoserine kinase, found in Citrobacter koseri (strain ATCC BAA-895 / CDC 4225-83 / SGSC4696).